Reading from the N-terminus, the 674-residue chain is Death-associated protein kinase related (674 aa).

The Protein kinase domain occupies 37-295 (EVEQTPFARG…ATGCLDHIWL (259 aa)). ATP is bound by residues 43–51 (FARGKFAAV) and lysine 66. Residue aspartate 160 is the Proton acceptor of the active site. 4 disordered regions span residues 308 to 388 (QPQS…GGSI), 412 to 440 (TLTS…SDKE), 511 to 583 (DSSG…TSGS), and 614 to 650 (TSSA…HHHV). Positions 312–343 (DAEEEEEEDVDDDVEDEEEEEQVEEEEEETQN) are enriched in acidic residues. Low complexity predominate over residues 352–363 (PQQQQQPVQQHQ). The segment covering 373-382 (KPTHNGHHRA) has biased composition (basic residues). Serine 384, serine 387, serine 435, serine 437, and serine 521 each carry phosphoserine. Positions 512-525 (SSGSAVARRSGGAV) are enriched in low complexity. Polar residues-rich tracts occupy residues 526-541 (TSSS…SVRL) and 555-564 (YKKQTSQNGC). 2 stretches are compositionally biased toward low complexity: residues 565 to 583 (SSTS…TSGS) and 614 to 631 (TSSA…TSAA). Positions 632-650 (HHLHHHHMHHHHHHHHHHV) are enriched in basic residues.

Belongs to the protein kinase superfamily. Ser/Thr protein kinase family.

The enzyme catalyses L-seryl-[protein] + ATP = O-phospho-L-seryl-[protein] + ADP + H(+). The catalysed reaction is L-threonyl-[protein] + ATP = O-phospho-L-threonyl-[protein] + ADP + H(+). This is Death-associated protein kinase related (Drak) from Drosophila melanogaster (Fruit fly).